A 196-amino-acid polypeptide reads, in one-letter code: Holliday junction branch migration complex subunit RuvA (196 aa).

Residues 1–63 (MIASVRGEVL…EDSMTLYGFP (63 aa)) are domain I. Residues 64 to 138 (DGETRDLFLT…DKVGVAATGG (75 aa)) form a domain II region. The flexible linker stretch occupies residues 138-142 (GALST). Residues 143 to 196 (NGHAVRSPVVEALVGLGFAAKQAEEATDTVLAANHDATTSSALRSALSLLGKAR) form a domain III region.

The protein belongs to the RuvA family. As to quaternary structure, homotetramer. Forms an RuvA(8)-RuvB(12)-Holliday junction (HJ) complex. HJ DNA is sandwiched between 2 RuvA tetramers; dsDNA enters through RuvA and exits via RuvB. An RuvB hexamer assembles on each DNA strand where it exits the tetramer. Each RuvB hexamer is contacted by two RuvA subunits (via domain III) on 2 adjacent RuvB subunits; this complex drives branch migration. In the full resolvosome a probable DNA-RuvA(4)-RuvB(12)-RuvC(2) complex forms which resolves the HJ.

It localises to the cytoplasm. The RuvA-RuvB-RuvC complex processes Holliday junction (HJ) DNA during genetic recombination and DNA repair, while the RuvA-RuvB complex plays an important role in the rescue of blocked DNA replication forks via replication fork reversal (RFR). RuvA specifically binds to HJ cruciform DNA, conferring on it an open structure. The RuvB hexamer acts as an ATP-dependent pump, pulling dsDNA into and through the RuvAB complex. HJ branch migration allows RuvC to scan DNA until it finds its consensus sequence, where it cleaves and resolves the cruciform DNA. This Mycobacterium bovis (strain ATCC BAA-935 / AF2122/97) protein is Holliday junction branch migration complex subunit RuvA.